The following is a 630-amino-acid chain: Elongation factor 4 (630 aa).

The interval 1-22 (MTVARNRAGAGPGKGSPISSFA) is disordered. Positions 30 to 211 (ARIRNFCIIA…EVVRQVPAPV (182 aa)) constitute a tr-type G domain. Residues 42–47 (DHGKST) and 158–161 (NKID) each bind GTP.

The protein belongs to the TRAFAC class translation factor GTPase superfamily. Classic translation factor GTPase family. LepA subfamily.

It localises to the cell membrane. The catalysed reaction is GTP + H2O = GDP + phosphate + H(+). In terms of biological role, required for accurate and efficient protein synthesis under certain stress conditions. May act as a fidelity factor of the translation reaction, by catalyzing a one-codon backward translocation of tRNAs on improperly translocated ribosomes. Back-translocation proceeds from a post-translocation (POST) complex to a pre-translocation (PRE) complex, thus giving elongation factor G a second chance to translocate the tRNAs correctly. Binds to ribosomes in a GTP-dependent manner. The protein is Elongation factor 4 of Rhodococcus opacus (strain B4).